The chain runs to 163 residues: 2-C-methyl-D-erythritol 2,4-cyclodiphosphate synthase (163 aa).

A divalent metal cation-binding residues include Asp-12 and His-14. Residues Asp-12–His-14 and His-38–Ser-39 each bind 4-CDP-2-C-methyl-D-erythritol 2-phosphate. Residue His-46 participates in a divalent metal cation binding. 4-CDP-2-C-methyl-D-erythritol 2-phosphate is bound by residues Asp-60–Gly-62, Thr-136–Glu-139, Phe-143, and Arg-146.

Belongs to the IspF family. Homotrimer. It depends on a divalent metal cation as a cofactor.

It catalyses the reaction 4-CDP-2-C-methyl-D-erythritol 2-phosphate = 2-C-methyl-D-erythritol 2,4-cyclic diphosphate + CMP. It functions in the pathway isoprenoid biosynthesis; isopentenyl diphosphate biosynthesis via DXP pathway; isopentenyl diphosphate from 1-deoxy-D-xylulose 5-phosphate: step 4/6. In terms of biological role, involved in the biosynthesis of isopentenyl diphosphate (IPP) and dimethylallyl diphosphate (DMAPP), two major building blocks of isoprenoid compounds. Catalyzes the conversion of 4-diphosphocytidyl-2-C-methyl-D-erythritol 2-phosphate (CDP-ME2P) to 2-C-methyl-D-erythritol 2,4-cyclodiphosphate (ME-CPP) with a corresponding release of cytidine 5-monophosphate (CMP). This Xanthomonas campestris pv. campestris (strain 8004) protein is 2-C-methyl-D-erythritol 2,4-cyclodiphosphate synthase.